We begin with the raw amino-acid sequence, 1396 residues long: DNA-directed RNA polymerase subunit beta' (1396 aa).

C73, C75, C88, and C91 together coordinate Zn(2+). Residues D467, D469, and D471 each coordinate Mg(2+). C817, C891, C898, and C901 together coordinate Zn(2+).

It belongs to the RNA polymerase beta' chain family. As to quaternary structure, the RNAP catalytic core consists of 2 alpha, 1 beta, 1 beta' and 1 omega subunit. When a sigma factor is associated with the core the holoenzyme is formed, which can initiate transcription. Mg(2+) is required as a cofactor. It depends on Zn(2+) as a cofactor.

It carries out the reaction RNA(n) + a ribonucleoside 5'-triphosphate = RNA(n+1) + diphosphate. DNA-dependent RNA polymerase catalyzes the transcription of DNA into RNA using the four ribonucleoside triphosphates as substrates. The protein is DNA-directed RNA polymerase subunit beta' of Orientia tsutsugamushi (strain Ikeda) (Rickettsia tsutsugamushi).